We begin with the raw amino-acid sequence, 384 residues long: Opsin-3 (384 aa).

The Extracellular segment spans residues 1–62; that stretch reads MATNFTQELY…VSKYWHYVLA (62 aa). Residue asparagine 4 is glycosylated (N-linked (GlcNAc...) asparagine). Residues 63 to 83 traverse the membrane as a helical segment; the sequence is LIYTMLMVTSLTGNGIVIWIF. Residues 84–94 are Cytoplasmic-facing; sequence STSKSLRSASN. The helical transmembrane segment at 95–115 threads the bilayer; that stretch reads MFVINLAVFDLMMMLEMPLLI. At 116 to 132 the chain is on the extracellular side; it reads MNSFYQRLVGYQLGCDV. A disulfide bridge links cysteine 130 with cysteine 207. The chain crosses the membrane as a helical span at residues 133–153; sequence YAVLGSLSGIGGAITNAVIAF. Residues 154–171 lie on the Cytoplasmic side of the membrane; that stretch reads DRYKTISSPLDGRINTVQ. The helical transmembrane segment at 172 to 192 threads the bilayer; the sequence is AGLLIAFTWFWALPFTILPAF. Over 193-219 the chain is Extracellular; it reads RIWGRFVPEGFLTTCSFDYFTEDQDTE. The chain crosses the membrane as a helical span at residues 220–240; sequence VFVACIFVWSYCIPMALICYF. At 241-284 the chain is on the cytoplasmic side; that stretch reads YSQLFGAVRLHERMLQEQAKKMNVKSLASNKEDNSRSVEIRIAK. Residues 285-305 form a helical membrane-spanning segment; sequence VAFTIFFLFICAWTPYAFVTM. At 306 to 312 the chain is on the extracellular side; it reads TGAFGDR. Residues 313–333 traverse the membrane as a helical segment; that stretch reads TLLTPIATMIPAVCCKVVSCI. Over 334 to 384 the chain is Cytoplasmic; the sequence is DPWVYAINHPRYRAELQKRLPWMGVREQDPDAVSTTTSVATAGFQPPAAEA.

This sequence belongs to the G-protein coupled receptor 1 family. Opsin subfamily. In the retina, expression is essentially uniformly distributed but a higher level is seen in the ventral region where the B-cells are localized.

The protein localises to the membrane. Functionally, visual pigments are the light-absorbing molecules that mediate vision. They consist of an apoprotein, opsin, covalently linked to cis-retinal. May play a role in photoperiodic photoreception. The polypeptide is Opsin-3 (OP3) (Manduca sexta (Tobacco hawkmoth)).